Consider the following 209-residue polypeptide: A-type ATP synthase subunit D (209 aa).

It belongs to the V-ATPase D subunit family. As to quaternary structure, has multiple subunits with at least A(3), B(3), C, D, E, F, H, I and proteolipid K(x).

The protein resides in the cell membrane. Component of the A-type ATP synthase that produces ATP from ADP in the presence of a proton gradient across the membrane. The sequence is that of A-type ATP synthase subunit D from Archaeoglobus fulgidus (strain ATCC 49558 / DSM 4304 / JCM 9628 / NBRC 100126 / VC-16).